The sequence spans 608 residues: UvrABC system protein C (608 aa).

Residues 15–93 (HQPGVYRMYN…IKQYLPKYNV (79 aa)) enclose the GIY-YIG domain. Positions 203–238 (RQVIQSLVEQMEGASQALNFEKAATIRDQIQSMRRV) constitute a UVR domain.

It belongs to the UvrC family. As to quaternary structure, interacts with UvrB in an incision complex.

It localises to the cytoplasm. The UvrABC repair system catalyzes the recognition and processing of DNA lesions. UvrC both incises the 5' and 3' sides of the lesion. The N-terminal half is responsible for the 3' incision and the C-terminal half is responsible for the 5' incision. In Aliivibrio salmonicida (strain LFI1238) (Vibrio salmonicida (strain LFI1238)), this protein is UvrABC system protein C.